The sequence spans 344 residues: MITLAVDCMGGDHGPRVTLAACRQFLEHHPQARLLLVGQPESLGGFAHERAQIVPASEVVSMDDPVEVALRRKKDSSMRVAVQQVKDGAAQVAVSAGNTGALMAIARYLLKTLDGIDRPAIATQMPNARGGATTVLDLGANVDCSAEHLLQFAVMGAALVSALHEGTEEPAVGLLNIGEEVIKGNEVIKRTGELLRSAAESGDLNFYGNVEGNDIFKGTVDIVVCDGFVGNVALKASEGVASMIVGALKQEFKRSIFTKIAAVVAYPVLSALMRRMDHRRYNGAALLGLRGLVFKSHGSADILAFEQALIRAYDTARNNLLDRVRSRVAHAAPLLGPAAAQPSP.

It belongs to the PlsX family. In terms of assembly, homodimer. Probably interacts with PlsY.

The protein localises to the cytoplasm. It carries out the reaction a fatty acyl-[ACP] + phosphate = an acyl phosphate + holo-[ACP]. Its pathway is lipid metabolism; phospholipid metabolism. Catalyzes the reversible formation of acyl-phosphate (acyl-PO(4)) from acyl-[acyl-carrier-protein] (acyl-ACP). This enzyme utilizes acyl-ACP as fatty acyl donor, but not acyl-CoA. The chain is Phosphate acyltransferase from Paracidovorax citrulli (strain AAC00-1) (Acidovorax citrulli).